A 53-amino-acid chain; its full sequence is Neuronal protein NP-190 (53 aa).

As to expression, mainly expressed in the fetal brain where it is specifically localized to the proximal axonal segments, cell bodies and growth cones. Lower level of expression was also detected in the fetal heart and the skeletal muscle. No expression in kidney, liver, lung or spleen.

It localises to the membrane. Functionally, neuronal antigen that may play a role in brain development. May be involved in neurite formation or axonal guidance. The chain is Neuronal protein NP-190 from Sus scrofa (Pig).